A 325-amino-acid chain; its full sequence is Tetraacyldisaccharide 4'-kinase (325 aa).

55 to 62 contributes to the ATP binding site; the sequence is TAGGNGKT.

This sequence belongs to the LpxK family.

It carries out the reaction a lipid A disaccharide + ATP = a lipid IVA + ADP + H(+). It functions in the pathway glycolipid biosynthesis; lipid IV(A) biosynthesis; lipid IV(A) from (3R)-3-hydroxytetradecanoyl-[acyl-carrier-protein] and UDP-N-acetyl-alpha-D-glucosamine: step 6/6. Its function is as follows. Transfers the gamma-phosphate of ATP to the 4'-position of a tetraacyldisaccharide 1-phosphate intermediate (termed DS-1-P) to form tetraacyldisaccharide 1,4'-bis-phosphate (lipid IVA). This Cronobacter sakazakii (strain ATCC BAA-894) (Enterobacter sakazakii) protein is Tetraacyldisaccharide 4'-kinase.